Here is a 421-residue protein sequence, read N- to C-terminus: 4-hydroxy-3-methylbut-2-en-1-yl diphosphate synthase (flavodoxin) (421 aa).

Residues Cys311, Cys314, Cys357, and Glu364 each contribute to the [4Fe-4S] cluster site.

Belongs to the IspG family. The cofactor is [4Fe-4S] cluster.

The enzyme catalyses (2E)-4-hydroxy-3-methylbut-2-enyl diphosphate + oxidized [flavodoxin] + H2O + 2 H(+) = 2-C-methyl-D-erythritol 2,4-cyclic diphosphate + reduced [flavodoxin]. The protein operates within isoprenoid biosynthesis; isopentenyl diphosphate biosynthesis via DXP pathway; isopentenyl diphosphate from 1-deoxy-D-xylulose 5-phosphate: step 5/6. In terms of biological role, converts 2C-methyl-D-erythritol 2,4-cyclodiphosphate (ME-2,4cPP) into 1-hydroxy-2-methyl-2-(E)-butenyl 4-diphosphate. This chain is 4-hydroxy-3-methylbut-2-en-1-yl diphosphate synthase (flavodoxin), found in Xanthomonas campestris pv. campestris (strain 8004).